We begin with the raw amino-acid sequence, 64 residues long: MMFRLTSVSCILLVIAFLNLVGLTNACTSEGYSCSSDSNCCKNVCCWNVCESHCGHHGKRATFQ.

Positions 1–26 are cleaved as a signal peptide; it reads MMFRLTSVSCILLVIAFLNLVGLTNA. 4 cysteine pairs are disulfide-bonded: cysteine 27–cysteine 41, cysteine 34–cysteine 46, cysteine 40–cysteine 50, and cysteine 45–cysteine 54. Histidine 57 is modified (histidine amide). Residues 61-64 constitute a propeptide that is removed on maturation; the sequence is ATFQ.

It belongs to the conotoxin I2 superfamily. In terms of tissue distribution, expressed by the venom duct.

It localises to the secreted. This is Conotoxin Im11.4 from Conus imperialis (Imperial cone).